Consider the following 185-residue polypeptide: Elongation factor P (185 aa).

Belongs to the elongation factor P family.

The protein localises to the cytoplasm. It functions in the pathway protein biosynthesis; polypeptide chain elongation. Its function is as follows. Involved in peptide bond synthesis. Stimulates efficient translation and peptide-bond synthesis on native or reconstituted 70S ribosomes in vitro. Probably functions indirectly by altering the affinity of the ribosome for aminoacyl-tRNA, thus increasing their reactivity as acceptors for peptidyl transferase. This chain is Elongation factor P, found in Bacillus velezensis (strain DSM 23117 / BGSC 10A6 / LMG 26770 / FZB42) (Bacillus amyloliquefaciens subsp. plantarum).